The sequence spans 429 residues: Putative F-box/kelch-repeat protein At2g21680 (429 aa).

Residues 1-32 (MVLISETSDDGSTGGDHQIKKPKKEEDRNKKL) are disordered. The segment covering 17 to 29 (HQIKKPKKEEDRN) has biased composition (basic and acidic residues). The 48-residue stretch at 37–84 (QVSLPIPEELILRCFLLVRRCHHPSLSLVCRSFHSLMSKLYDDRLRLG) folds into the F-box domain. Kelch repeat units follow at residues 144-175 (DIYV…RRGE), 176-221 (TSIR…VIDG), 222-267 (KIYV…LTYA), 269-313 (MKEK…VVDN), and 315-359 (LFCI…DGYK).

The protein is Putative F-box/kelch-repeat protein At2g21680 of Arabidopsis thaliana (Mouse-ear cress).